We begin with the raw amino-acid sequence, 207 residues long: ATP-dependent Clp protease proteolytic subunit (207 aa).

Ser-111 acts as the Nucleophile in catalysis. His-136 is an active-site residue.

Belongs to the peptidase S14 family. Fourteen ClpP subunits assemble into 2 heptameric rings which stack back to back to give a disk-like structure with a central cavity, resembling the structure of eukaryotic proteasomes. Component of the ClpAP and ClpXP complexes.

The protein localises to the cytoplasm. It catalyses the reaction Hydrolysis of proteins to small peptides in the presence of ATP and magnesium. alpha-casein is the usual test substrate. In the absence of ATP, only oligopeptides shorter than five residues are hydrolyzed (such as succinyl-Leu-Tyr-|-NHMec, and Leu-Tyr-Leu-|-Tyr-Trp, in which cleavage of the -Tyr-|-Leu- and -Tyr-|-Trp bonds also occurs).. Cleaves peptides in various proteins in a process that requires ATP hydrolysis. Has a chymotrypsin-like activity. Plays a major role in the degradation of misfolded proteins. The protein is ATP-dependent Clp protease proteolytic subunit of Salmonella enteritidis PT4 (strain P125109).